A 161-amino-acid polypeptide reads, in one-letter code: Regulator of ribonuclease activity A (161 aa).

Belongs to the RraA family. In terms of assembly, homotrimer. Binds to both RNA-binding sites in the C-terminal region of Rne and to RhlB.

Its subcellular location is the cytoplasm. In terms of biological role, globally modulates RNA abundance by binding to RNase E (Rne) and regulating its endonucleolytic activity. Can modulate Rne action in a substrate-dependent manner by altering the composition of the degradosome. Modulates RNA-binding and helicase activities of the degradosome. This Shewanella denitrificans (strain OS217 / ATCC BAA-1090 / DSM 15013) protein is Regulator of ribonuclease activity A.